A 169-amino-acid chain; its full sequence is Disulfide bond formation protein B (169 aa).

Residues 1-13 lie on the Cytoplasmic side of the membrane; sequence MSQLQQFCHNRFS. Residues 14–30 traverse the membrane as a helical segment; that stretch reads WGLLLLSAIGLELAALF. Residues 31–48 lie on the Periplasmic side of the membrane; the sequence is FQYGMDLAPCVMCIYIRV. Cysteine 40 and cysteine 43 are oxidised to a cystine. A helical transmembrane segment spans residues 49–64; sequence AVLGIILAALIGILQP. At 65–71 the chain is on the cytoplasmic side; it reads KVWLLRL. Residues 72-89 form a helical membrane-spanning segment; the sequence is VGMAGWAVSAVWGFKLAY. Over 90-144 the chain is Periplasmic; sequence ELNQMQVNPSPFATCSFYPEFPSFMPLDTWLPSVFSPTGMCSDSPWSWLSVSMAQ. The cysteines at positions 104 and 130 are disulfide-linked. The helical transmembrane segment at 145-163 threads the bilayer; that stretch reads WMMLGFAIYGVIWLLMLLP. The Cytoplasmic segment spans residues 164–169; it reads ALKSAK.

This sequence belongs to the DsbB family.

Its subcellular location is the cell inner membrane. Its function is as follows. Required for disulfide bond formation in some periplasmic proteins. Acts by oxidizing the DsbA protein. The sequence is that of Disulfide bond formation protein B from Shewanella frigidimarina (strain NCIMB 400).